The chain runs to 482 residues: Lipoamide acyltransferase component of branched-chain alpha-keto acid dehydrogenase complex, mitochondrial (482 aa).

The transit peptide at 1–61 directs the protein to the mitochondrion; that stretch reads MAAARVLRTW…HSLRTAAVLQ (61 aa). Residues 64-139 form the Lipoyl-binding domain; sequence VVQFKLSDIG…YVGKPLIDIE (76 aa). K105 carries the N6-lipoyllysine modification. N6-succinyllysine is present on K133. The segment at 145–160 is critical for association with PPM1K; the sequence is DSEEDVVETPAVSHDE. The 38-residue stretch at 172–209 folds into the Peripheral subunit-binding (PSBD) domain; that stretch reads LATPAVRRLAMENNIKLSEVVGSGKDGRILKEDILSFL. K196 is subject to N6-acetyllysine; alternate. Position 196 is an N6-succinyllysine; alternate (K196). At K202 the chain carries N6-acetyllysine. Residues 217–252 are disordered; it reads LPPSPKSEITPPPPQPKDRTFPTPIAKPPVFTGKDR. Over residues 218–231 the composition is skewed to pro residues; that stretch reads PPSPKSEITPPPPQ. S220 is subject to Phosphoserine. N6-acetyllysine is present on residues K243 and K250. Residue K261 is modified to N6-succinyllysine. Residue K289 is modified to N6-acetyllysine; alternate. K289 bears the N6-succinyllysine; alternate mark. Position 291 (R291) interacts with CoA. N6-acetyllysine is present on residues K295 and K304. Residues S306, D349, Q378, S399, N400, S403, G424, and I426 each contribute to the CoA site. Position 435 is an N6-acetyllysine (K435). K440 carries the post-translational modification N6-acetyllysine; alternate. K440 bears the N6-succinyllysine; alternate mark. Residues H452 and D456 contribute to the active site.

The protein belongs to the 2-oxoacid dehydrogenase family. In terms of assembly, forms a 24-polypeptide structural core with octahedral symmetry that represents the E2 component of the branched-chain alpha-ketoacid dehydrogenase (BCKDH) complex. The BCKDH complex is composed of three major building blocks E1, E2 and E3. It is organized around E2, a 24-meric cubic core composed of DBT, to which are associated 6 to 12 copies of E1, and approximately 6 copies of the dehydrogenase E3, a DLD dimer. Interacts with PPM1K with a 24:1 stoichiometry; the N-terminal region (residues 49-61) of PPM1K and C-terminal linker of the lipoyl domain of DBT/E2 (residues 145-160) are critical for this interaction whereas the lipoyl prosthetic group is dispensable. This interaction requires colocalization in mitochondria. PPM1K competes with BCKDK for binding to DBT; this interaction is modulated by branched-chain alpha-keto acids (BCKAs). At steady state, BCKDH holoenzyme preferentially binds BCKDK and BCKDHA is phosphorylated. In response to high levels of BCKAs, BCKDK is replaced by PPM1K leading to BCKDHA dephosphorylation. (R)-lipoate serves as cofactor.

It is found in the mitochondrion matrix. It carries out the reaction N(6)-[(R)-dihydrolipoyl]-L-lysyl-[protein] + 2-methylpropanoyl-CoA = N(6)-[(R)-S(8)-2-methylpropanoyldihydrolipoyl]-L-lysyl-[protein] + CoA. Its function is as follows. The branched-chain alpha-keto dehydrogenase complex catalyzes the overall conversion of alpha-keto acids to acyl-CoA and CO(2). It contains multiple copies of three enzymatic components: branched-chain alpha-keto acid decarboxylase (E1), lipoamide acyltransferase (E2) and lipoamide dehydrogenase (E3). Within this complex, the catalytic function of this enzyme is to accept, and to transfer to coenzyme A, acyl groups that are generated by the branched-chain alpha-keto acid decarboxylase component. The chain is Lipoamide acyltransferase component of branched-chain alpha-keto acid dehydrogenase complex, mitochondrial (Dbt) from Mus musculus (Mouse).